Consider the following 260-residue polypeptide: Ribonuclease HII (260 aa).

One can recognise an RNase H type-2 domain in the interval glutamine 70–asparagine 260. A divalent metal cation is bound by residues aspartate 76, glutamate 77, and aspartate 171.

This sequence belongs to the RNase HII family. Mn(2+) is required as a cofactor. It depends on Mg(2+) as a cofactor.

It localises to the cytoplasm. It catalyses the reaction Endonucleolytic cleavage to 5'-phosphomonoester.. Its function is as follows. Endonuclease that specifically degrades the RNA of RNA-DNA hybrids. The sequence is that of Ribonuclease HII from Streptococcus mutans serotype c (strain ATCC 700610 / UA159).